The chain runs to 223 residues: Immediate early response gene 2 protein (223 aa).

N-acetylmethionine is present on M1. Positions 63–172 are disordered; the sequence is AALPSDPRLH…PPAQAEGAFP (110 aa). Over residues 69–78 the composition is skewed to basic and acidic residues; that stretch reads PRLHPPREAE. The segment covering 125-138 has biased composition (low complexity); that stretch reads SSLSDGGDAGLVPS.

The protein belongs to the IER family. In terms of tissue distribution, expressed in activated T-cells (at protein level). Expression increases in metastatic tumor cells (at protein level).

It is found in the cytoplasm. The protein localises to the nucleus. Its function is as follows. DNA-binding protein that seems to act as a transcription factor. Involved in the regulation of neuronal differentiation, acts upon JNK-signaling pathway activation and plays a role in neurite outgrowth in hippocampal cells. May mediate with FIBP FGF-signaling in the establishment of laterality in the embryo. Promotes cell motility, seems to stimulate tumor metastasis. The chain is Immediate early response gene 2 protein from Homo sapiens (Human).